The following is a 163-amino-acid chain: Choriogonadotropin subunit beta (163 aa).

The signal sequence occupies residues M1 to A20. 6 disulfides stabilise this stretch: C29-C76, C43-C91, C46-C129, C54-C107, C58-C109, and C112-C119. N-linked (GlcNAc...) asparagine glycosylation occurs at N50. An N-linked (GlcNAc...) asparagine glycan is attached at N124. The span at Q135–Q151 shows a compositional bias: polar residues. Residues Q135 to Q163 are disordered. A glycan (O-linked (GalNAc...) serine) is linked at S139. An N-linked (GlcNAc...) asparagine glycan is attached at N145. S150 carries an O-linked (GalNAc...) serine glycan.

The protein belongs to the glycoprotein hormones subunit beta family. In terms of assembly, heterodimer of a common alpha chain and a unique beta chain which confers biological specificity to thyrotropin, lutropin, follitropin and gonadotropin.

Its subcellular location is the secreted. Functionally, stimulates the ovaries to synthesize the steroids that are essential for the maintenance of pregnancy. This Saimiri boliviensis boliviensis (Bolivian squirrel monkey) protein is Choriogonadotropin subunit beta (CGB).